The primary structure comprises 419 residues: UDP-N-acetylglucosamine 1-carboxyvinyltransferase (419 aa).

Phosphoenolpyruvate is bound at residue 22–23 (KN). Arginine 91 provides a ligand contact to UDP-N-acetyl-alpha-D-glucosamine. Cysteine 115 serves as the catalytic Proton donor. The residue at position 115 (cysteine 115) is a 2-(S-cysteinyl)pyruvic acid O-phosphothioketal. Residues 120 to 124 (RPVDL), 160 to 163 (KVSV), aspartate 305, and valine 327 each bind UDP-N-acetyl-alpha-D-glucosamine.

It belongs to the EPSP synthase family. MurA subfamily.

The protein resides in the cytoplasm. It carries out the reaction phosphoenolpyruvate + UDP-N-acetyl-alpha-D-glucosamine = UDP-N-acetyl-3-O-(1-carboxyvinyl)-alpha-D-glucosamine + phosphate. Its pathway is cell wall biogenesis; peptidoglycan biosynthesis. Its function is as follows. Cell wall formation. Adds enolpyruvyl to UDP-N-acetylglucosamine. This Salmonella dublin (strain CT_02021853) protein is UDP-N-acetylglucosamine 1-carboxyvinyltransferase.